Here is an 89-residue protein sequence, read N- to C-terminus: Cell division topological specificity factor (89 aa).

This sequence belongs to the MinE family.

Its function is as follows. Prevents the cell division inhibition by proteins MinC and MinD at internal division sites while permitting inhibition at polar sites. This ensures cell division at the proper site by restricting the formation of a division septum at the midpoint of the long axis of the cell. The sequence is that of Cell division topological specificity factor from Edwardsiella ictaluri (strain 93-146).